We begin with the raw amino-acid sequence, 224 residues long: MRSAEEKTVLLCALDDDLEGLKGILERTFTDDAAQSENILWEKDEVGRNALFAACMMGRSAIVRELVQNGAADVNELTARGYSPLHCSAMWGQLDTLKTLVELNADFQAINFRGEKAVDVARRYDKLDCAEYLAWAEAKQNLQAFIQEVRAIVADQEKVQGKLNKEDKNICINTCSAKSDWINNTRTATAQDFIEQKKLLEDVLAPVLLKLNAQPEASMKTRKN.

ANK repeat units follow at residues 46-76 and 80-109; these read VGRNALFAACMMGRSAIVRELVQNGAADVNE and RGYSPLHCSAMWGQLDTLKTLVELNADFQA.

Widely expressed.

It localises to the cytoplasm. It is found in the midbody. Its subcellular location is the midbody ring. The protein localises to the cleavage furrow. Functionally, may play a role during cell division. The sequence is that of Ankyrin repeat domain-containing protein 45 from Danio rerio (Zebrafish).